Reading from the N-terminus, the 271-residue chain is 2,3,4,5-tetrahydropyridine-2,6-dicarboxylate N-succinyltransferase (271 aa).

The substrate site is built by R103 and D140.

This sequence belongs to the transferase hexapeptide repeat family. In terms of assembly, homotrimer.

The protein localises to the cytoplasm. It catalyses the reaction (S)-2,3,4,5-tetrahydrodipicolinate + succinyl-CoA + H2O = (S)-2-succinylamino-6-oxoheptanedioate + CoA. It participates in amino-acid biosynthesis; L-lysine biosynthesis via DAP pathway; LL-2,6-diaminopimelate from (S)-tetrahydrodipicolinate (succinylase route): step 1/3. The sequence is that of 2,3,4,5-tetrahydropyridine-2,6-dicarboxylate N-succinyltransferase from Methylococcus capsulatus (strain ATCC 33009 / NCIMB 11132 / Bath).